Reading from the N-terminus, the 427-residue chain is Enolase (427 aa).

Glutamine 163 lines the (2R)-2-phosphoglycerate pocket. Glutamate 205 serves as the catalytic Proton donor. Residues aspartate 242, glutamate 285, and aspartate 312 each contribute to the Mg(2+) site. (2R)-2-phosphoglycerate contacts are provided by lysine 337, arginine 366, serine 367, and lysine 388. Lysine 337 (proton acceptor) is an active-site residue.

The protein belongs to the enolase family. Mg(2+) is required as a cofactor.

Its subcellular location is the cytoplasm. It localises to the secreted. The protein resides in the cell surface. The catalysed reaction is (2R)-2-phosphoglycerate = phosphoenolpyruvate + H2O. It participates in carbohydrate degradation; glycolysis; pyruvate from D-glyceraldehyde 3-phosphate: step 4/5. In terms of biological role, catalyzes the reversible conversion of 2-phosphoglycerate (2-PG) into phosphoenolpyruvate (PEP). It is essential for the degradation of carbohydrates via glycolysis. This chain is Enolase, found in Burkholderia lata (strain ATCC 17760 / DSM 23089 / LMG 22485 / NCIMB 9086 / R18194 / 383).